A 118-amino-acid chain; its full sequence is MLDSLKQKKNFQRIKMRIKTGDLVKVINGKDKGKTGEVLKTIPLENRVVVKGINLRTKHVKPTQEGETGRILTEEASLHASNVMFFSKDKNLTSKIEYFIDKEGVKKRRLKKTGEVID.

This sequence belongs to the universal ribosomal protein uL24 family. Part of the 50S ribosomal subunit.

In terms of biological role, one of two assembly initiator proteins, it binds directly to the 5'-end of the 23S rRNA, where it nucleates assembly of the 50S subunit. Functionally, one of the proteins that surrounds the polypeptide exit tunnel on the outside of the subunit. The polypeptide is Large ribosomal subunit protein uL24 (Prochlorococcus marinus (strain AS9601)).